Here is a 302-residue protein sequence, read N- to C-terminus: Pseudouridine-5'-phosphate glycosidase (302 aa).

The active-site Proton donor is Glu-25. Substrate contacts are provided by Lys-86 and Val-106. Asp-138 is a binding site for Mn(2+). Position 140–142 (140–142) interacts with substrate; that stretch reads SAD. The Nucleophile role is filled by Lys-159.

It belongs to the pseudouridine-5'-phosphate glycosidase family. As to quaternary structure, homotrimer. It depends on Mn(2+) as a cofactor.

It catalyses the reaction D-ribose 5-phosphate + uracil = psi-UMP + H2O. Catalyzes the reversible cleavage of pseudouridine 5'-phosphate (PsiMP) to ribose 5-phosphate and uracil. Functions biologically in the cleavage direction, as part of a pseudouridine degradation pathway. The protein is Pseudouridine-5'-phosphate glycosidase of Jannaschia sp. (strain CCS1).